Consider the following 97-residue polypeptide: Insertion element IS2 uncharacterized 11.1 kDa protein (97 aa).

This is Insertion element IS2 uncharacterized 11.1 kDa protein from Escherichia coli.